A 153-amino-acid polypeptide reads, in one-letter code: Cofilin (153 aa).

Residues 15 to 147 (GVAVNDSALQ…AYESVLERVS (133 aa)) enclose the ADF-H domain.

Belongs to the actin-binding proteins ADF family.

It is found in the cytoplasm. The protein resides in the cytoskeleton. It localises to the nucleus matrix. Functionally, controls reversibly actin polymerization and depolymerization in a pH-sensitive manner. It has the ability to bind G- and F-actin in a 1:1 ratio of cofilin to actin. Binding to F-actin is regulated by tropomyosin. It is the major component of intranuclear and cytoplasmic actin rods. Required for accumulation of actin at the cell division site via depolymerizing actin at the cell ends. In association with myosin II has a role in the assembly of the contractile ring via severing actin filaments. Involved in the maintenance of the contractile ring once formed. In association with profilin and capping protein, has a role in the mitotic reorganization of the actin cytoskeleton. The chain is Cofilin (COF1) from Yarrowia lipolytica (strain CLIB 122 / E 150) (Yeast).